The primary structure comprises 283 residues: Non-selective voltage-gated ion channel VDAC3 (283 aa).

An N-acetylcysteine modification is found at C2. T4 carries the post-translational modification Phosphothreonine. K12, K15, and K20 each carry N6-acetyllysine. A run of 2 beta stranded transmembrane segments spans residues M26–S35 and V39–A47. Residue K53 forms a Glycyl lysine isopeptide (Lys-Gly) (interchain with G-Cter in ubiquitin) linkage. 3 beta stranded membrane passes run A54–V64, L69–N76, and T80–N89. K90 carries the post-translational modification N6-acetyllysine. The chain crosses the membrane as a beta stranded span at residues L95 to V104. Residues K109 and K110 each participate in a glycyl lysine isopeptide (Lys-Gly) (interchain with G-Cter in ubiquitin) cross-link. Transmembrane regions (beta stranded) follow at residues S111–R120, F123–D130, T137–A145, L150–D158, K163–A175, F178–N185, E189–V198, I202–T211, R218–L227, and T231–N238. S241 carries the phosphoserine modification. NAD(+)-binding positions include L242–G244 and S260–D264. Transmembrane regions (beta stranded) follow at residues L242–L251 and G254–I263. An N6-acetyllysine; alternate modification is found at K266. A Glycyl lysine isopeptide (Lys-Gly) (interchain with G-Cter in ubiquitin); alternate cross-link involves residue K266. A beta stranded transmembrane segment spans residues H273–E282.

This sequence belongs to the eukaryotic mitochondrial porin family. In terms of assembly, interacts with ARMC12 in a TBC1D21-dependent manner. Interacts with MISFA. In terms of processing, ubiquitinated by PRKN during mitophagy, leading to its degradation and enhancement of mitophagy. Deubiquitinated by USP30. In terms of tissue distribution, highest levels of expression detected in testis, less but still abundant expression in heart, kidney, brain, and skeletal muscle.

Its subcellular location is the mitochondrion outer membrane. The protein localises to the membrane. The catalysed reaction is chloride(in) = chloride(out). It carries out the reaction K(+)(in) = K(+)(out). Its function is as follows. Non-selective voltage-gated ion channel that mediates the transport of anions and cations through the mitochondrion outer membrane and plasma membrane. Forms a high-conducting channel with a stable open state and a voltage-induced closure with a mild preference for anions over cations. Involved in male fertility and sperm mitochondrial sheath formation. In Mus musculus (Mouse), this protein is Non-selective voltage-gated ion channel VDAC3.